The following is a 215-amino-acid chain: N-(5'-phosphoribosyl)anthranilate isomerase (215 aa).

The protein belongs to the TrpF family.

It catalyses the reaction N-(5-phospho-beta-D-ribosyl)anthranilate = 1-(2-carboxyphenylamino)-1-deoxy-D-ribulose 5-phosphate. Its pathway is amino-acid biosynthesis; L-tryptophan biosynthesis; L-tryptophan from chorismate: step 3/5. This Ruegeria sp. (strain TM1040) (Silicibacter sp.) protein is N-(5'-phosphoribosyl)anthranilate isomerase.